The sequence spans 199 residues: Ribonuclease HII (199 aa).

The RNase H type-2 domain occupies 14 to 199; that stretch reads GLLAGVDEAG…SFAPVAEVLR (186 aa). A divalent metal cation contacts are provided by Asp20, Glu21, and Asp112.

Belongs to the RNase HII family. Mn(2+) is required as a cofactor. The cofactor is Mg(2+).

Its subcellular location is the cytoplasm. It catalyses the reaction Endonucleolytic cleavage to 5'-phosphomonoester.. Functionally, endonuclease that specifically degrades the RNA of RNA-DNA hybrids. The polypeptide is Ribonuclease HII (Polaromonas sp. (strain JS666 / ATCC BAA-500)).